Reading from the N-terminus, the 154-residue chain is Lipoprotein signal peptidase (154 aa).

Helical transmembrane passes span 55–75 and 85–105; these read GQFWLFYLITVIVVAAIVIYI and AGVGLGLMLGGAIGNFLDRVF. Residues aspartate 111 and aspartate 129 contribute to the active site. Residues 127-147 form a helical membrane-spanning segment; the sequence is VADSALTVGVILLFVHMFFFA.

It belongs to the peptidase A8 family.

Its subcellular location is the cell membrane. It catalyses the reaction Release of signal peptides from bacterial membrane prolipoproteins. Hydrolyzes -Xaa-Yaa-Zaa-|-(S,diacylglyceryl)Cys-, in which Xaa is hydrophobic (preferably Leu), and Yaa (Ala or Ser) and Zaa (Gly or Ala) have small, neutral side chains.. It functions in the pathway protein modification; lipoprotein biosynthesis (signal peptide cleavage). In terms of biological role, this protein specifically catalyzes the removal of signal peptides from prolipoproteins. This is Lipoprotein signal peptidase from Geobacillus kaustophilus (strain HTA426).